The chain runs to 708 residues: C-Jun-amino-terminal kinase-interacting protein 1 (708 aa).

Positions Met-1–Ile-26 are disordered. The span at Gly-11 to Leu-24 shows a compositional bias: low complexity. Residues Ser-14, Ser-28, and Ser-39 each carry the phosphoserine modification. Residues Pro-69 to Thr-368 form a disordered region. Positions Arg-71–Leu-87 are enriched in low complexity. Thr-103 is modified (phosphothreonine; by MAPK8, MAPK9 and MAPK10). The segment covering Gly-105 to Leu-116 has biased composition (acidic residues). A JNK-binding domain (JBD) region spans residues Ser-126–Pro-282. Phosphoserine is present on Ser-149. A minimal inhibitory domain (MID) region spans residues Arg-154–Thr-173. Residues Thr-159 to Leu-179 are compositionally biased toward polar residues. 5 positions are modified to phosphoserine: Ser-178, Ser-184, Ser-190, Ser-192, and Ser-193. Positions Arg-191–Gln-201 are enriched in polar residues. Position 202 is a phosphothreonine; by MAPK8, MAPK9 and MAPK10 (Thr-202). Ser-211 bears the Phosphoserine mark. Residues Pro-220 to Ser-232 are compositionally biased toward polar residues. Residues Ile-264 to Ala-274 are compositionally biased toward basic and acidic residues. The interaction with MAP3K7 stretch occupies residues Leu-280–Ser-468. Residues Pro-292 to Ser-308 show a composition bias toward polar residues. Residues Ser-308, Ser-325, Ser-327, Ser-337, Ser-352, Ser-363, Ser-366, Ser-404, and Ser-406 each carry the phosphoserine modification. 2 short sequence motifs (D-box) span residues Arg-350–Pro-357 and Arg-361–Ser-369. The residue at position 408 (Thr-408) is a Phosphothreonine. A disordered region spans residues Glu-426–Glu-448. Ser-441 and Ser-444 each carry phosphoserine. Thr-445 carries the post-translational modification Phosphothreonine. 4 positions are modified to phosphoserine: Ser-466, Ser-468, Ser-469, and Ser-470. Residues Ser-468 to Ile-657 are interaction with VRK2. One can recognise an SH3 domain in the interval Glu-485–Lys-546. Residues Ser-558 to Glu-697 enclose the PID domain.

Belongs to the JIP scaffold family. Forms homo- or heterooligomeric complexes. Binds specific components of the JNK signaling pathway namely MAPK8/JNK1, MAPK9/JNK2, MAPK10/JNK3, MAP2K7/MKK7, MAP3K11/MLK3 and DLK1. Also binds the proline-rich domain-containing splice variant of apolipoprotein E receptor 2 (ApoER2). Interacts, via the PID domain, with ARHGEF28. Binds the cytoplasmic tails of LRP1 and LRP2 (Megalin). Binds the TPR motif-containing C-terminal of kinesin light chain, KLC1. Pre-assembled MAPK8IP1 scaffolding complexes are then transported as a cargo of kinesin, to the required subcellular location. Interacts with the cytoplasmic domain of APP. Interacts with DCLK2, VRK2 and MAP3K7/TAK1. Found in a complex with SH3RF1, RAC1, MAP3K11/MLK3, MAP2K7/MKK7 and MAPK8/JNK1. Found in a complex with SH3RF1, RAC2, MAP3K7/TAK1, MAP2K7/MKK7, MAPK8/JNK1 and MAPK9/JNK2. Interacts with SH3RF2. Post-translationally, phosphorylated by MAPK8, MAPK9 and MAPK10. Phosphorylation on Thr-103 is also necessary for the dissociation and activation of MAP3K12. Phosphorylated by VRK2. Hyperphosphorylated during mitosis following activation of stress-activated and MAP kinases. Ubiquitinated. Two preliminary events are required to prime for ubiquitination; phosphorylation and an increased in intracellular calcium concentration. Then, the calcium influx initiates ubiquitination and degradation by the ubiquitin-proteasome pathway. Highly expressed in brain and pancreatic beta-cells. Weaker expression found in kidney.

It is found in the cytoplasm. It localises to the perinuclear region. Its subcellular location is the nucleus. The protein localises to the endoplasmic reticulum membrane. The protein resides in the mitochondrion membrane. Its function is as follows. The JNK-interacting protein (JIP) group of scaffold proteins selectively mediates JNK signaling by aggregating specific components of the MAPK cascade to form a functional JNK signaling module. Required for JNK activation in response to excitotoxic stress. Cytoplasmic MAPK8IP1 causes inhibition of JNK-regulated activity by retaining JNK in the cytoplasm and thus inhibiting the JNK phosphorylation of c-Jun. May also participate in ApoER2-specific reelin signaling. Directly, or indirectly, regulates GLUT2 gene expression and beta-cell function. Appears to have a role in cell signaling in mature and developing nerve terminals. May function as a regulator of vesicle transport, through interactions with the JNK-signaling components and motor proteins. Functions as an anti-apoptotic protein and whose level seems to influence the beta-cell death or survival response. Acts as a scaffold protein that coordinates with SH3RF1 in organizing different components of the JNK pathway, including RAC1 or RAC2, MAP3K11/MLK3 or MAP3K7/TAK1, MAP2K7/MKK7, MAPK8/JNK1 and/or MAPK9/JNK2 into a functional multiprotein complex to ensure the effective activation of the JNK signaling pathway. Regulates the activation of MAPK8/JNK1 and differentiation of CD8(+) T-cells. This chain is C-Jun-amino-terminal kinase-interacting protein 1 (Mapk8ip1), found in Rattus norvegicus (Rat).